The sequence spans 317 residues: Ribonuclease Z (317 aa).

H63, H65, D67, H68, H143, D214, and H272 together coordinate Zn(2+). The active-site Proton acceptor is D67.

This sequence belongs to the RNase Z family. Homodimer. Zn(2+) is required as a cofactor.

The catalysed reaction is Endonucleolytic cleavage of RNA, removing extra 3' nucleotides from tRNA precursor, generating 3' termini of tRNAs. A 3'-hydroxy group is left at the tRNA terminus and a 5'-phosphoryl group is left at the trailer molecule.. In terms of biological role, zinc phosphodiesterase, which displays some tRNA 3'-processing endonuclease activity. Probably involved in tRNA maturation, by removing a 3'-trailer from precursor tRNA. The polypeptide is Ribonuclease Z (Ligilactobacillus salivarius (strain UCC118) (Lactobacillus salivarius)).